The sequence spans 185 residues: MARDREHRAEREDRDNTFVDKLVHINRVAKVVKGGRRFGFAALVIVGDQKGRVGFGHGKAREVPEAIRKATESAKRALIRVPLREGRTLHHDVHGHHGAGKVILRAAPAGTGIIAGGPMRAVFETLGVHDVVAKSFGSSNPYNMVRATFDALTNQDSPRSVAARRGLKVSQLQSRRRVEDAEATD.

Residues 18 to 81 (FVDKLVHINR…ESAKRALIRV (64 aa)) form the S5 DRBM domain.

The protein belongs to the universal ribosomal protein uS5 family. In terms of assembly, part of the 30S ribosomal subunit. Contacts proteins S4 and S8.

With S4 and S12 plays an important role in translational accuracy. In terms of biological role, located at the back of the 30S subunit body where it stabilizes the conformation of the head with respect to the body. The polypeptide is Small ribosomal subunit protein uS5 (Azorhizobium caulinodans (strain ATCC 43989 / DSM 5975 / JCM 20966 / LMG 6465 / NBRC 14845 / NCIMB 13405 / ORS 571)).